The primary structure comprises 100 residues: Urease subunit gamma (100 aa).

This sequence belongs to the urease gamma subunit family. As to quaternary structure, heterotrimer of UreA (gamma), UreB (beta) and UreC (alpha) subunits. Three heterotrimers associate to form the active enzyme.

The protein resides in the cytoplasm. It carries out the reaction urea + 2 H2O + H(+) = hydrogencarbonate + 2 NH4(+). The protein operates within nitrogen metabolism; urea degradation; CO(2) and NH(3) from urea (urease route): step 1/1. This is Urease subunit gamma from Arthrobacter sp. (strain FB24).